The sequence spans 254 residues: Zinc finger FYVE domain-containing protein 21 (254 aa).

An FYVE-type zinc finger spans residues 44 to 104 (DKECPRCMQC…QCAGCAPVSR (61 aa)). Zn(2+) is bound by residues Cys-50, Cys-53, Cys-66, Cys-69, Cys-74, Cys-77, Cys-96, and Cys-99. The interval 107 to 254 (ADFYDRQLKL…AKLLYESRDQ (148 aa)) is PH-like.

In terms of assembly, interacts with PTK2/FAK1.

Its subcellular location is the cell junction. The protein resides in the focal adhesion. It localises to the cytoplasmic vesicle. The protein localises to the endosome. Its function is as follows. Plays a role in cell adhesion, and thereby in cell motility which requires repeated formation and disassembly of focal adhesions. Regulates microtubule-induced PTK2/FAK1 dephosphorylation, an event important for focal adhesion disassembly, as well as integrin beta-1/ITGB1 cell surface expression. The polypeptide is Zinc finger FYVE domain-containing protein 21 (ZFYVE21) (Bos taurus (Bovine)).